We begin with the raw amino-acid sequence, 209 residues long: Uracil phosphoribosyltransferase (209 aa).

5-phospho-alpha-D-ribose 1-diphosphate is bound by residues Arg79, Arg104, and 131–139 (DPMLATGNS). Uracil contacts are provided by residues Ile194 and 199–201 (GDA). Residue Asp200 participates in 5-phospho-alpha-D-ribose 1-diphosphate binding.

It belongs to the UPRTase family. Requires Mg(2+) as cofactor.

The enzyme catalyses UMP + diphosphate = 5-phospho-alpha-D-ribose 1-diphosphate + uracil. The protein operates within pyrimidine metabolism; UMP biosynthesis via salvage pathway; UMP from uracil: step 1/1. Allosterically activated by GTP. Catalyzes the conversion of uracil and 5-phospho-alpha-D-ribose 1-diphosphate (PRPP) to UMP and diphosphate. This is Uracil phosphoribosyltransferase from Sinorhizobium medicae (strain WSM419) (Ensifer medicae).